Here is a 683-residue protein sequence, read N- to C-terminus: MIDQYKHKQLQIGLVSPQQIKAWAKKILPNGEVVGEVTRPSTFHYKTDKPEKDGLFCERIFGPIKSGICACGNSRASVAENEDERFCQKCGVEFVDSRIRRYQMGYIKLACPVTHVWYLKGLPSYIANLLDKPLKKLEGLVYGDFSFARPSAKKPTFLRLRGLFEDEISSCNHSISPFFSTPGFATFRNREIATGAGAIREQLADLDLRIIIENSLVEWKELEDEGYSGDEWEDRKRRIRKVFLIRRMQLAKHFIQTNVEPEWMVLCLLPVLPPELRPIVYRSGDKVVTSDINELYKRVIRRNNNLAYLLKRSELAPADLVMCQEKLVQEAVDTLLDSGSRGQPMRDGHNKVYKSLSDVIEGKEGRFRETLLGKRVDYSGRSVIVVGPSLSLHQCGLPLEIAIKLFQLFVIRDLITKRATSNVRIAKRKIWEKEPIVWEILQEVMRGHPVLLNRAPTLHRLGIQAFQPTLVEGRTICLHPLVCKGFNADFDGDQMAVHLPLSLEAQAEARLLMFSHMNLLSPAIGDPICVPTQDMLIGLYVLTIGNRRGICANRYNSCGNSPNKKINYNNNNYYKYTKDKEPHFSSSYDALGAYRQKRIGLNSPLWLRWKLDQRIVGSREVPIEVQYESFGTYHEIYAHYLVVGNRKKEIRSIYIRTTLGHISFYREIEEAIQGFSRAYSYTI.

C69, C71, C87, and C90 together coordinate Zn(2+). Mg(2+) contacts are provided by D489, D491, and D493.

This sequence belongs to the RNA polymerase beta' chain family. RpoC1 subfamily. In terms of assembly, in plastids the minimal PEP RNA polymerase catalytic core is composed of four subunits: alpha, beta, beta', and beta''. When a (nuclear-encoded) sigma factor is associated with the core the holoenzyme is formed, which can initiate transcription. Mg(2+) is required as a cofactor. The cofactor is Zn(2+).

Its subcellular location is the plastid. It is found in the chloroplast. The enzyme catalyses RNA(n) + a ribonucleoside 5'-triphosphate = RNA(n+1) + diphosphate. DNA-dependent RNA polymerase catalyzes the transcription of DNA into RNA using the four ribonucleoside triphosphates as substrates. The chain is DNA-directed RNA polymerase subunit beta' from Sorghum bicolor (Sorghum).